We begin with the raw amino-acid sequence, 1264 residues long: MTKETDKKPKERPNQRKVAFRNEAINALVNTDEDQVTFSKAMEVAKLDCQKCLLHDMHSSKSSNCRDNPFCIHRLGLEKFEKLITQEQETKEEAKKDQKRRDLNDQPAGLINGGNFCYVNSFLQVWFNVPEFRQLIYDFRPSENFVPPEAPRMNVQATMLALQDIFYTLQTTPFNETDKTSNLGKLLRLNSEQQDSQEFGLKFFNALERCLPDHPNGKETLKRLKDLFTGETCTRIVCKCGQRSEREETAISLTLNIEGYCTLLDALDAYFGEEHLDDFKCSKCNKTGDVSKQSDYVKLPPVIVIQLNRYKYTSKGRQKLKTPMAYPREIPAKAFQRTNNSIPPPAEMYDLFAVTIHEGNNAECGHYYDLIKSPLNQKWYRYNDEAIEAIPKPPGTEKPTTAKTEKSRKKDKEKYPTDQKACYGLLYRRRDAFKPLPHPKLPPEELIIDSKTEIEELFEGLTKKKIEKSEKRLYDLERRINKVKISYGKLETHSDKYKEANEVVFLPTTLLQDVLAQEYEVAKGEKKKKKKEASENEEKKKNEEDEALSAAIAASEADQRDKASSEPSTSAAATEAGDDEELRAESETPNPENAESTQVAIMETDEIMDTTPTKDIDILAKAMEDNALPTVEVPQPELKKRTRQQNGEVKYVYSQRTPRKSHNGTNGTNSSPQKQPVSSRVAALLSSHEIPTCGHGKMSIDPILYGDVKAVSRAPAIALLREYDFRVKIVYDNGENVFPENEKERDVFIFTAEDICMECVREMREEGNFNNQLEDDEKLVRRILKEEKQRCSVKCPSERPDGYLYVAKFALSNFKKSAMSARENRLAQSHNKQGTLHFDSHPMFQQKSNSGYLTLSLKRTRGKPRKSLSEIPEKMQKLDEIGSKELPDEIIADEEEISENMGSDIPTKPVESINPDALVPFEKIEFNSELRCSHGGINFNQFRLSVSPEEWAHLKVYFDECYEVKCSDDVCDQCRQMEVDAQNGSENMRGLVREMRKRISDTLKTVESRAESKEDGADIKYGICSVFIDKLRKLTSRQSTSPPSICQECLLCPHQQPFKGFLNEDNHKDSHVVGLTEEEWNTFLTEIRKLEEAGDDQSIAVDPCPIPIENGQIVDMCEKCFEQHIKFTEEQKYMFENENIYVKLVNLNVEEDIAKANGKARRGRAKNLYAIKMSSTNKLMELKVQLYDKTHQLPNDQLLYRTAGGEQFDVSNNQKTLFDLRLSPNNNDNPLILIAQQFSPSASQADETGDRAPERGFVDTALAH.

In terms of domain architecture, USP spans Ala108–Arg430. Cys117 (nucleophile) is an active-site residue. His366 acts as the Proton acceptor in catalysis. Disordered stretches follow at residues Ile390–Tyr415, Ala522–Thr610, and Thr630–Ser679. 2 stretches are compositionally biased toward basic and acidic residues: residues Lys403–Tyr415 and Glu532–Glu543. A coiled-coil region spans residues Ala516–Ala547. Residues Ser565 to Glu575 are compositionally biased toward low complexity. Composition is skewed to polar residues over residues Glu587–Val599 and Asn663–Ser678.

Belongs to the peptidase C19 family. As to expression, broadly expressed. Expressed in germline.

It is found in the nucleus. It localises to the chromosome. It carries out the reaction Thiol-dependent hydrolysis of ester, thioester, amide, peptide and isopeptide bonds formed by the C-terminal Gly of ubiquitin (a 76-residue protein attached to proteins as an intracellular targeting signal).. Recognizes and hydrolyzes the peptide bond at the C-terminal Gly of ubiquitin. Involved in the processing of poly-ubiquitin precursors as well as that of ubiquitinated proteins. Required post-developmentally to restrict the plasticity of epidermal cells, probably by regulating gene expression. The protein is Ubiquitin carboxyl-terminal hydrolase usp-48 of Caenorhabditis elegans.